Reading from the N-terminus, the 262-residue chain is Shikimate dehydrogenase (NADP(+)) (262 aa).

Residues 15–17 and threonine 62 contribute to the shikimate site; that span reads SRS. Catalysis depends on lysine 66, which acts as the Proton acceptor. Glutamate 78 lines the NADP(+) pocket. The shikimate site is built by asparagine 87 and aspartate 102. NADP(+)-binding positions include 126-130, 150-155, and methionine 214; these read GAGGA and NRTLAR. Position 216 (tyrosine 216) interacts with shikimate. Residue glycine 236 coordinates NADP(+).

This sequence belongs to the shikimate dehydrogenase family. As to quaternary structure, homodimer.

The enzyme catalyses shikimate + NADP(+) = 3-dehydroshikimate + NADPH + H(+). Its pathway is metabolic intermediate biosynthesis; chorismate biosynthesis; chorismate from D-erythrose 4-phosphate and phosphoenolpyruvate: step 4/7. Functionally, involved in the biosynthesis of the chorismate, which leads to the biosynthesis of aromatic amino acids. Catalyzes the reversible NADPH linked reduction of 3-dehydroshikimate (DHSA) to yield shikimate (SA). This chain is Shikimate dehydrogenase (NADP(+)), found in Acinetobacter baumannii (strain AB0057).